The sequence spans 426 residues: Gamma-glutamyl phosphate reductase (426 aa).

This sequence belongs to the gamma-glutamyl phosphate reductase family.

The protein localises to the cytoplasm. The enzyme catalyses L-glutamate 5-semialdehyde + phosphate + NADP(+) = L-glutamyl 5-phosphate + NADPH + H(+). It functions in the pathway amino-acid biosynthesis; L-proline biosynthesis; L-glutamate 5-semialdehyde from L-glutamate: step 2/2. Functionally, catalyzes the NADPH-dependent reduction of L-glutamate 5-phosphate into L-glutamate 5-semialdehyde and phosphate. The product spontaneously undergoes cyclization to form 1-pyrroline-5-carboxylate. The polypeptide is Gamma-glutamyl phosphate reductase (Sorangium cellulosum (strain So ce56) (Polyangium cellulosum (strain So ce56))).